The chain runs to 633 residues: Threonine--tRNA ligase (633 aa).

The TGS domain occupies 1 to 61; the sequence is MPAIRLPDGS…DHDVDLAIVT (61 aa). The interval 242–533 is catalytic; it reads DHRKLGRQLD…LIEHHAGAMP (292 aa). Residues C333, H384, and H510 each contribute to the Zn(2+) site.

The protein belongs to the class-II aminoacyl-tRNA synthetase family. Homodimer. Requires Zn(2+) as cofactor.

It localises to the cytoplasm. The catalysed reaction is tRNA(Thr) + L-threonine + ATP = L-threonyl-tRNA(Thr) + AMP + diphosphate + H(+). Functionally, catalyzes the attachment of threonine to tRNA(Thr) in a two-step reaction: L-threonine is first activated by ATP to form Thr-AMP and then transferred to the acceptor end of tRNA(Thr). Also edits incorrectly charged L-seryl-tRNA(Thr). The sequence is that of Threonine--tRNA ligase from Laribacter hongkongensis (strain HLHK9).